A 506-amino-acid polypeptide reads, in one-letter code: Nostrin (506 aa).

Residues Met-1 to Asp-260 form the F-BAR domain. Ser-114 is subject to Phosphoserine. The stretch at Ser-160 to Leu-222 forms a coiled coil. Residues Ala-292 to Glu-372 form the REM-1 domain. Positions Leu-438–Ser-497 constitute an SH3 domain. The residue at position 479 (Ser-479) is a Phosphoserine.

In terms of assembly, homotrimer. Interacts with DAB2. Interacts with NOS3, DNM2, WASL and CAV1. Interacts (via SH3 domain) with DNM2; this interaction allows the recruitment of NOS3 to dynamin-positive structures. As to expression, expressed at highest levels in heart, kidney, placenta and lung, and at lowest levels in brain, thymus and spleen. Present in vascular endothelial cells and placenta. Over-expressed in placenta from women with pre-eclampsia (at protein level).

It is found in the cell membrane. Its subcellular location is the cytoplasmic vesicle. The protein localises to the cytoplasm. It localises to the cytoskeleton. The protein resides in the nucleus. Functionally, multivalent adapter protein which may decrease NOS3 activity by inducing its translocation away from the plasma membrane. The protein is Nostrin of Homo sapiens (Human).